We begin with the raw amino-acid sequence, 77 residues long: Putative sulfur carrier protein YedF (77 aa).

The active-site Cysteine persulfide intermediate is the cysteine 17.

It belongs to the sulfur carrier protein TusA family.

The polypeptide is Putative sulfur carrier protein YedF (yedF) (Escherichia coli O157:H7).